Consider the following 120-residue polypeptide: Large ribosomal subunit protein uL24 (120 aa).

Residues Met-1–Ala-26 are disordered. Basic residues predominate over residues Lys-10–Val-24.

Belongs to the universal ribosomal protein uL24 family. As to quaternary structure, part of the 50S ribosomal subunit. Interacts weakly with protein L4.

One of two assembly initiator proteins, it binds directly to the 5'-end of the 23S rRNA, where it nucleates assembly of the 50S subunit. Its function is as follows. Stabilizes the tertiary rRNA structure within the 23S rRNA domain (domain I) to which it binds. Located at the polypeptide exit tunnel on the outside of the subunit. The protein is Large ribosomal subunit protein uL24 (rpl24) of Haloarcula marismortui (strain ATCC 43049 / DSM 3752 / JCM 8966 / VKM B-1809) (Halobacterium marismortui).